Here is a 97-residue protein sequence, read N- to C-terminus: M-zodatoxin-Lt7a (97 aa).

The signal sequence occupies residues 1–22; that stretch reads MKFYVVALALLVAFVCIAESRS. A propeptide spanning residues 23–63 is cleaved from the precursor; the sequence is VETERAVDADLEDDLDDLEEYLEGIAEALELEDFPDTEEAR. The short motif at 60–63 is the Processing quadruplet motif element; the sequence is EEAR.

In terms of processing, cleavage of the propeptide depends on the processing quadruplet motif (XXXR, with at least one of X being E). Expressed by the venom gland.

It localises to the secreted. Its function is as follows. Does not have antimicrobial or antifungal activity. Does not have hemolytic activity against rabbit erythrocytes. However, it causes some conductance changes in planar bilayer membranes, without membrane rupture, suggesting a cytolytic function on other biological targets. It causes paralysis, but is not lethal when injected into insect (M.domestica) larvae. This chain is M-zodatoxin-Lt7a, found in Lachesana tarabaevi (Spider).